Reading from the N-terminus, the 269-residue chain is 4-hydroxy-tetrahydrodipicolinate reductase (269 aa).

Residues 8 to 13 (GAAGRM) and Glu-34 each bind NAD(+). Arg-35 provides a ligand contact to NADP(+). NAD(+)-binding positions include 98–100 (GTT) and 122–125 (APNY). His-155 serves as the catalytic Proton donor/acceptor. Position 156 (His-156) interacts with (S)-2,3,4,5-tetrahydrodipicolinate. Lys-159 serves as the catalytic Proton donor. 165 to 166 (GT) is a binding site for (S)-2,3,4,5-tetrahydrodipicolinate.

The protein belongs to the DapB family.

The protein localises to the cytoplasm. It carries out the reaction (S)-2,3,4,5-tetrahydrodipicolinate + NAD(+) + H2O = (2S,4S)-4-hydroxy-2,3,4,5-tetrahydrodipicolinate + NADH + H(+). It catalyses the reaction (S)-2,3,4,5-tetrahydrodipicolinate + NADP(+) + H2O = (2S,4S)-4-hydroxy-2,3,4,5-tetrahydrodipicolinate + NADPH + H(+). It functions in the pathway amino-acid biosynthesis; L-lysine biosynthesis via DAP pathway; (S)-tetrahydrodipicolinate from L-aspartate: step 4/4. Functionally, catalyzes the conversion of 4-hydroxy-tetrahydrodipicolinate (HTPA) to tetrahydrodipicolinate. In Vibrio vulnificus (strain YJ016), this protein is 4-hydroxy-tetrahydrodipicolinate reductase.